A 218-amino-acid chain; its full sequence is Glutathione S-transferase Mu 3 (218 aa).

The 87-residue stretch at 2 to 88 folds into the GST N-terminal domain; that stretch reads PMTLGYWNTR…YLGRKHNLCG (87 aa). Glutathione is bound by residues 7-8, 46-50, and 59-60; these read YW, WLSEK, and NL. Lysine 50 participates in a covalent cross-link: Glycyl lysine isopeptide (Lys-Gly) (interchain with G-Cter in SUMO2). Lysine 69 is covalently cross-linked (Glycyl lysine isopeptide (Lys-Gly) (interchain with G-Cter in SUMO2)). Position 72-73 (72-73) interacts with glutathione; sequence QS. One can recognise a GST C-terminal domain in the interval 90-208; the sequence is TEEERIRVDT…KSSRFLPRPV (119 aa).

Belongs to the GST superfamily. Mu family. As to quaternary structure, homodimer.

It localises to the cytoplasm. It carries out the reaction RX + glutathione = an S-substituted glutathione + a halide anion + H(+). Functionally, conjugation of reduced glutathione to a wide number of exogenous and endogenous hydrophobic electrophiles. This is Glutathione S-transferase Mu 3 (Gstm3) from Mus musculus (Mouse).